Consider the following 209-residue polypeptide: Ubiquitin-conjugating enzyme E2 S (209 aa).

The UBC core domain occupies 14–160 (QTIRQVMREL…ARMMTEIHAQ (147 aa)). Cys-98 (glycyl thioester intermediate) is an active-site residue. Positions 165 to 209 (GVGATGDAKDDGGPSTKKHAGLDKKLQDKKKEKLLKEKKRMLKRL) are disordered. The span at 184-199 (AGLDKKLQDKKKEKLL) shows a compositional bias: basic and acidic residues. Residues 200 to 209 (KEKKRMLKRL) show a composition bias toward basic residues.

The protein belongs to the ubiquitin-conjugating enzyme family.

It carries out the reaction S-ubiquitinyl-[E1 ubiquitin-activating enzyme]-L-cysteine + [E2 ubiquitin-conjugating enzyme]-L-cysteine = [E1 ubiquitin-activating enzyme]-L-cysteine + S-ubiquitinyl-[E2 ubiquitin-conjugating enzyme]-L-cysteine.. It participates in protein modification; protein ubiquitination. Its function is as follows. Catalyzes the covalent attachment of ubiquitin to other proteins. Acts as an essential factor of the anaphase promoting complex/cyclosome (APC/C), a cell cycle-regulated ubiquitin ligase that controls progression through mitosis. Acts by specifically elongating polyubiquitin chains initiated by the E2 enzyme vih/UbcH10 on APC/C substrates, enhancing the degradation of APC/C substrates by the proteasome and promoting mitotic exit. This is Ubiquitin-conjugating enzyme E2 S from Drosophila simulans (Fruit fly).